The sequence spans 111 residues: Ig kappa chain V-III region PC 2880/PC 1229 (111 aa).

The interval 1-23 (DIVLTQSPASLAVSLGQRATISC) is framework-1. A disulfide bond links C23 and C92. Residues 24–38 (RASESVDNYGISFMN) form a complementarity-determining-1 region. The segment at 39 to 53 (WFQQKPGQPPKLLIY) is framework-2. Residues 54–60 (AASNQGS) form a complementarity-determining-2 region. Residues 61-92 (GVPARFSGSGSGTDFSLNIHPMEEDDTAMYFC) are framework-3. Residues 93–101 (QQSKEVPWT) are complementarity-determining-3. A framework-4 region spans residues 102–111 (FGGGTKLEIK).

The sequence is that of Ig kappa chain V-III region PC 2880/PC 1229 from Mus musculus (Mouse).